The sequence spans 354 residues: Probable protein phosphatase 2C 27 (354 aa).

In terms of domain architecture, PPM-type phosphatase spans 54-319 (RSGDWSDIGG…DNLTAVMVSF (266 aa)). Residues Asp-98, Gly-99, Asp-267, and Asp-310 each coordinate Mn(2+).

This sequence belongs to the PP2C family. The cofactor is Mg(2+). It depends on Mn(2+) as a cofactor.

It catalyses the reaction O-phospho-L-seryl-[protein] + H2O = L-seryl-[protein] + phosphate. The enzyme catalyses O-phospho-L-threonyl-[protein] + H2O = L-threonyl-[protein] + phosphate. The polypeptide is Probable protein phosphatase 2C 27 (Oryza sativa subsp. japonica (Rice)).